Reading from the N-terminus, the 283-residue chain is NAD kinase (283 aa).

The active-site Proton acceptor is D66. NAD(+)-binding positions include 66–67 (DG), 137–138 (ND), R165, D167, and 178–183 (TGYSLS).

It belongs to the NAD kinase family. A divalent metal cation is required as a cofactor.

It is found in the cytoplasm. The catalysed reaction is NAD(+) + ATP = ADP + NADP(+) + H(+). In terms of biological role, involved in the regulation of the intracellular balance of NAD and NADP, and is a key enzyme in the biosynthesis of NADP. Catalyzes specifically the phosphorylation on 2'-hydroxyl of the adenosine moiety of NAD to yield NADP. The protein is NAD kinase of Chloroherpeton thalassium (strain ATCC 35110 / GB-78).